The following is a 1308-amino-acid chain: Contactin-associated protein-like 4 (1308 aa).

The first 25 residues, 1 to 25 (MGSVTGAVLKTLLLLSTQNWNRVEA), serve as a signal peptide directing secretion. The Extracellular portion of the chain corresponds to 26–1241 (GNSYDCDDPL…LANAIKSDSA (1216 aa)). The F5/8 type C domain occupies 31–177 (CDDPLVSALP…IGMRIEVFGC (147 aa)). C31 and C177 are disulfide-bonded. Laminin G-like domains lie at 212–364 (FKTM…SFSC) and 398–547 (FRTW…IDSC). N-linked (GlcNAc...) asparagine glycans are attached at residues N260, N285, N359, and N538. 4 cysteine pairs are disulfide-bonded: C332–C364, C515–C547, C553–C564, and C558–C573. Residues 549-586 (ISDRCLPNYCEHGGECSQSWSTFHCNCTNTGYRGATCH) enclose the EGF-like 1 domain. A glycan (N-linked (GlcNAc...) asparagine) is linked at N574. Cysteines 575 and 585 form a disulfide. Positions 587 to 792 (NSIYEQSCEA…LLCQGDRSFW (206 aa)) constitute a Fibrinogen C-terminal domain. Residues N602, N625, N637, N706, and N748 are each glycosylated (N-linked (GlcNAc...) asparagine). Positions 793–957 (NSASFDTEAS…AQVTPEVQPG (165 aa)) constitute a Laminin G-like 3 domain. Intrachain disulfides connect C931–C958, C962–C975, C969–C984, and C986–C996. The EGF-like 2 domain occupies 958-997 (CRGHCSSYGKLCRNGGKCRERPIGFFCDCTFSAYTGPFCS). 2 N-linked (GlcNAc...) asparagine glycosylation sites follow: N1023 and N1073. The Laminin G-like 4 domain maps to 1046-1202 (FRTTRTPSLL…VTGHVTESSC (157 aa)). C1167 and C1202 are joined by a disulfide. Residues 1242–1262 (VIGGLIAVVIFILLCITAIAV) traverse the membrane as a helical segment. Topologically, residues 1263–1308 (RIYQQKRLYKRSEAKRSENVDSAEAVLKSELNIQNAVNENQKEYFF) are cytoplasmic.

This sequence belongs to the neurexin family. As to quaternary structure, interacts with TIAM1.

Its subcellular location is the presynaptic cell membrane. Functionally, presynaptic protein involved in both dopaminergic synaptic transmission and GABAergic system, thereby participating in the structural maturation of inhibitory interneuron synapses. Involved in the dopaminergic synaptic transmission by attenuating dopamine release through a presynaptic mechanism. Also participates in the GABAergic system. The chain is Contactin-associated protein-like 4 (CNTNAP4) from Homo sapiens (Human).